We begin with the raw amino-acid sequence, 478 residues long: MLLLEFKKTNQTLETIHFIGIGGVGMSGIAEILHNLGYKVQGSDLVENYNTKRLESYGIKIFLGHAEQNITNVSYVVISSAINSNNPEIKEALERKIPIIRRAEMLAELMRLKCSVAVSGSHGKTTTTSLVACLFEAAGLCPTVINGGIINNKSTNAYLGSSNYLIAEADESDATFIHIPSTIAIITNIDPEHLDYYKDFETLIGAFKSFITNLPFYGFAVCCIDHKIVRKLVDDITERKIVTYGIDSEDAHIIAFNINTDIASSTFDVKISLPNVLGTTIIEKITIPTPGRHNILNSLAAIAVGIELDFGIKAIKNGFNNFKGVKRRFTKVAEYNKAVVIDDYAHHPEEIKATLATAKNIADKQNGKVIAIFQPHRYSRMQHLFDDFMLCFNDADMIYITDIYAAGEEPIEGITSQNLVNKITKNKHHDQANFLAELDDAVEVIIDNASSGDMIIMMGAGNISSFANELDGRLSSRT.

An ATP-binding site is contributed by 120–126 (GSHGKTT).

This sequence belongs to the MurCDEF family.

It localises to the cytoplasm. The enzyme catalyses UDP-N-acetyl-alpha-D-muramate + L-alanine + ATP = UDP-N-acetyl-alpha-D-muramoyl-L-alanine + ADP + phosphate + H(+). It functions in the pathway cell wall biogenesis; peptidoglycan biosynthesis. Its function is as follows. Cell wall formation. This is UDP-N-acetylmuramate--L-alanine ligase from Rickettsia felis (strain ATCC VR-1525 / URRWXCal2) (Rickettsia azadi).